Reading from the N-terminus, the 241-residue chain is Large ribosomal subunit protein uL13c (241 aa).

A chloroplast-targeting transit peptide spans 1–50; it reads MAVLCSSSTVILSSSSVKSSGSERKSPFLGFSLTAISKPSVRVGIYANSK.

The protein belongs to the universal ribosomal protein uL13 family. Part of the 50S ribosomal subunit.

Its subcellular location is the plastid. The protein resides in the chloroplast. The polypeptide is Large ribosomal subunit protein uL13c (RPL13) (Arabidopsis thaliana (Mouse-ear cress)).